A 282-amino-acid polypeptide reads, in one-letter code: MKIITTVQEMQQITNELRASGKSIGFVPTMGYLHEGHATLLRKAREENEIVVLSVFVNPLQFGPNEDLDRYPRDIDRDENVAKENGVDYLFYPSVEEMYPAEQTTTVEVVKRTDVLCGKQRPGHFAGVATVLMKLFNITLPTRAYFGMKDAQQVAVIEGFVADFNIPVTIVPVDIVREEDGLAKSSRNVYLSQEEREEAPHLYRSLCIAKERIEAGERNAEIITTLVKEYIETYTKGTVDYADLYTYPSLQVVDKIEGRIILAIAVKFDNVRLIDNITLTVK.

Residue 30 to 37 (MGYLHEGH) coordinates ATP. The active-site Proton donor is histidine 37. (R)-pantoate is bound at residue glutamine 61. Residue glutamine 61 coordinates beta-alanine. 147-150 (GMKD) is an ATP binding site. Glutamine 153 serves as a coordination point for (R)-pantoate. ATP is bound by residues valine 176 and 184–187 (KSSR).

The protein belongs to the pantothenate synthetase family. As to quaternary structure, homodimer.

It is found in the cytoplasm. The enzyme catalyses (R)-pantoate + beta-alanine + ATP = (R)-pantothenate + AMP + diphosphate + H(+). It participates in cofactor biosynthesis; (R)-pantothenate biosynthesis; (R)-pantothenate from (R)-pantoate and beta-alanine: step 1/1. Its function is as follows. Catalyzes the condensation of pantoate with beta-alanine in an ATP-dependent reaction via a pantoyl-adenylate intermediate. This Bacillus cereus (strain ATCC 10987 / NRS 248) protein is Pantothenate synthetase.